The primary structure comprises 78 residues: Large ribosomal subunit protein eL38 (78 aa).

The protein belongs to the eukaryotic ribosomal protein eL38 family. As to quaternary structure, component of the large ribosomal subunit. Mature ribosomes consist of a small (40S) and a large (60S) subunit. The 40S subunit contains about 32 different proteins and 1 molecule of RNA (18S). The 60S subunit contains 45 different proteins and 3 molecules of RNA (25S, 5.8S and 5S).

It is found in the cytoplasm. Functionally, component of the ribosome, a large ribonucleoprotein complex responsible for the synthesis of proteins in the cell. The small ribosomal subunit (SSU) binds messenger RNAs (mRNAs) and translates the encoded message by selecting cognate aminoacyl-transfer RNA (tRNA) molecules. The large subunit (LSU) contains the ribosomal catalytic site termed the peptidyl transferase center (PTC), which catalyzes the formation of peptide bonds, thereby polymerizing the amino acids delivered by tRNAs into a polypeptide chain. The nascent polypeptides leave the ribosome through a tunnel in the LSU and interact with protein factors that function in enzymatic processing, targeting, and the membrane insertion of nascent chains at the exit of the ribosomal tunnel. This Candida albicans (strain SC5314 / ATCC MYA-2876) (Yeast) protein is Large ribosomal subunit protein eL38.